The sequence spans 328 residues: uncharacterized protein (328 aa).

Residues 1-22 (MPVKPNQPRPSTKQDPSSGASR) are disordered. The span at 9 to 21 (RPSTKQDPSSGAS) shows a compositional bias: polar residues. 6 helical membrane passes run 66–86 (FSFLSLIPILMVSFATAGFVL), 126–146 (TVGLTGLLIALYSGVNWIGNL), 176–196 (FLSLIGLLLALVITLFLTSVA), 221–241 (LIALSISIFANYLLFLWILWV), 255–275 (GTLMAAIGFEALKFAMTVALP), and 290–310 (IGLMTFFYFFARLTLFCAAWI).

This sequence to E.coli YhjD.

It localises to the cell inner membrane. This is an uncharacterized protein from Dickeya dadantii (strain 3937) (Erwinia chrysanthemi (strain 3937)).